Reading from the N-terminus, the 484-residue chain is Poly(A) polymerase alpha-B (484 aa).

The Nuclear localization signal 1 signature appears at 240-257; that stretch reads RKQLHQLLPSHVLPKKKK. Disordered stretches follow at residues 276–314, 326–356, and 375–484; these read SVDS…PVSL, VPQN…SSTP, and KPVT…RLNR. A Nuclear localization signal 2 motif is present at residues 392 to 407; the sequence is KRTSSPTNEESPKKTK. Basic and acidic residues predominate over residues 423–441; the sequence is EQNKLEPEELKEVHSEEKS. Low complexity predominate over residues 451-464; it reads SSQRSSSTDLSDIS.

It belongs to the poly(A) polymerase family. Monomer.

Its subcellular location is the nucleus. It carries out the reaction RNA(n) + ATP = RNA(n)-3'-adenine ribonucleotide + diphosphate. Polymerase that creates the 3'-poly(A) tail of mRNA's. May acquire specificity through interaction with a cleavage and polyadenylation factor (CPSF). In Xenopus laevis (African clawed frog), this protein is Poly(A) polymerase alpha-B (papola-b).